The chain runs to 326 residues: Vitamin B12 import system permease protein BtuC (326 aa).

9 helical membrane-spanning segments follow: residues 15–35 (WLLC…CAGE), 61–81 (LAVL…QALF), 88–108 (PGLL…VLLG), 112–132 (LPNW…TLIL), 146–166 (LLAG…AIYF), 184–204 (GGVD…LLWI), 240–260 (GWMV…GLVI), 274–294 (VLLP…DIVA), and 302–322 (ELPI…WLLL).

The protein belongs to the binding-protein-dependent transport system permease family. FecCD subfamily. In terms of assembly, the complex is composed of two ATP-binding proteins (BtuD), two transmembrane proteins (BtuC) and a solute-binding protein (BtuF).

The protein resides in the cell inner membrane. Functionally, part of the ABC transporter complex BtuCDF involved in vitamin B12 import. Involved in the translocation of the substrate across the membrane. This is Vitamin B12 import system permease protein BtuC from Escherichia coli O9:H4 (strain HS).